The sequence spans 145 residues: Peptidyl-prolyl cis-trans isomerase (145 aa).

Residues 1-145 (MTQAILETEK…LSVKIVTDAA (145 aa)) enclose the PPIase cyclophilin-type domain.

The protein belongs to the cyclophilin-type PPIase family.

The catalysed reaction is [protein]-peptidylproline (omega=180) = [protein]-peptidylproline (omega=0). Its function is as follows. PPIases accelerate the folding of proteins. It catalyzes the cis-trans isomerization of proline imidic peptide bonds in oligopeptides. The chain is Peptidyl-prolyl cis-trans isomerase (rot) from Synechococcus elongatus (strain ATCC 33912 / PCC 7942 / FACHB-805) (Anacystis nidulans R2).